The following is a 667-amino-acid chain: WD repeat-containing protein 48 homolog (667 aa).

WD repeat units follow at residues 26–65, 71–110, 113–152, 164–203, 206–245, 248–287, 290–329, and 349–388; these read QHRN…NDKY, HHND…CMST, THRD…ALTA, GSKD…RSMK, GHTE…CIQT, VHKE…NKML, EEKA…RCTL, and KGGA…KKEE. The interval 591–615 is disordered; that stretch reads ETTPSGGNANNSLQNSQSDANSEGS.

This sequence belongs to the WD repeat WDR48 family. In terms of assembly, catalytic component of the Usp12-46 deubiquitylase complex consisting of Usp12-46, Wdr20 and Uaf1; regulatory subunit that, together wtih Wdr20, stabilizes Usp12-46. The Usp12-46 deubiquitylase complex associates with arr/arrow; the interaction leads to deubiquitination and stabilization of arr/arrow.

Regulatory component of the Usp12-46 deubiquitylase complex. activates deubiquitination by increasing the catalytic turnover without increasing the affinity of deubiquitinating enzymes for the substrate. The complex deubiquitylates the wg/wingless-signaling receptor arr/arrow, which stabilizes the receptor and increases its concentration at the cell surface; this enhances the sensitivity of cells to wg/wingless-signal stimulation. This increases the amplitude and spatial range of the signaling response to the wg/wingless morphogen gradient, facilitating the precise concentration-dependent regulation of its target genes. Together with Wdr20 and Usp12-46 required for wg/wingless-mediated signaling in the wing imaginal disc and for wg/wingless-dependent regulation of intestinal stem cell proliferation. This is WD repeat-containing protein 48 homolog from Drosophila virilis (Fruit fly).